Consider the following 72-residue polypeptide: Translation initiation factor IF-1 (72 aa).

Residues 1–72 (MSKDDVIEMQ…SRGRITWRAK (72 aa)) enclose the S1-like domain.

The protein belongs to the IF-1 family. As to quaternary structure, component of the 30S ribosomal translation pre-initiation complex which assembles on the 30S ribosome in the order IF-2 and IF-3, IF-1 and N-formylmethionyl-tRNA(fMet); mRNA recruitment can occur at any time during PIC assembly.

It localises to the cytoplasm. One of the essential components for the initiation of protein synthesis. Stabilizes the binding of IF-2 and IF-3 on the 30S subunit to which N-formylmethionyl-tRNA(fMet) subsequently binds. Helps modulate mRNA selection, yielding the 30S pre-initiation complex (PIC). Upon addition of the 50S ribosomal subunit IF-1, IF-2 and IF-3 are released leaving the mature 70S translation initiation complex. The chain is Translation initiation factor IF-1 from Clostridium novyi (strain NT).